A 372-amino-acid chain; its full sequence is Alpha-1-antitrypsin homolog (372 aa).

The N-terminal stretch at 1 to 19 (MPATCLLHTMLTLPSPSTR) is a signal peptide. 2 N-linked (GlcNAc...) asparagine glycosylation sites follow: Asn214 and Asn226. An RCL region spans residues 328–347 (AATTIEIMPMSLPDTVILNR).

Belongs to the serpin family.

The protein resides in the secreted. In Cyprinus carpio (Common carp), this protein is Alpha-1-antitrypsin homolog.